The following is a 715-amino-acid chain: Polyribonucleotide nucleotidyltransferase (715 aa).

Mg(2+) contacts are provided by D495 and D501. Residues 562–621 (PRLLTLQIPPDMIGLVIGPGGKTVRGISEQYNVKVDISEEGLVTITAPNETNAKQARAAI) form the KH domain. Residues 631–699 (GDVYLGRVTR…SKGRINLTRL (69 aa)) enclose the S1 motif domain.

This sequence belongs to the polyribonucleotide nucleotidyltransferase family. Mg(2+) serves as cofactor.

It is found in the cytoplasm. It catalyses the reaction RNA(n+1) + phosphate = RNA(n) + a ribonucleoside 5'-diphosphate. Its function is as follows. Involved in mRNA degradation. Catalyzes the phosphorolysis of single-stranded polyribonucleotides processively in the 3'- to 5'-direction. This Thermosynechococcus vestitus (strain NIES-2133 / IAM M-273 / BP-1) protein is Polyribonucleotide nucleotidyltransferase.